Consider the following 450-residue polypeptide: Zinc finger protein 446 (450 aa).

Positions 26-108 constitute an SCAN box domain; that stretch reads RLRFRGFCYQ…ALVEGLQHDP (83 aa). K130 is covalently cross-linked (Glycyl lysine isopeptide (Lys-Gly) (interchain with G-Cter in SUMO2)). Disordered regions lie at residues 130 to 155 and 168 to 205; these read KTEE…QDTR and EEPN…SFHP. Phosphoserine is present on S137. Residues 208 to 254 enclose the KRAB domain; that stretch reads IQEEWGLLDRSQKELYWDAMLEKYGTVVSLGLPPHQPEAQAQSELGM. S218 carries the phosphoserine modification. 2 disordered regions span residues 263-331 and 354-389; these read RSLR…PRKP and HTSG…RRSL. A compositionally biased stretch (pro residues) spans 275-286; it reads PGCPEAQPPQGP. Low complexity predominate over residues 287 to 306; the sequence is GPAAWEGLSGAATPAPTVRP. Position 308 is a phosphothreonine (T308). Residue K330 forms a Glycyl lysine isopeptide (Lys-Gly) (interchain with G-Cter in SUMO2) linkage. C2H2-type zinc fingers lie at residues 332 to 359, 395 to 422, and 423 to 450; these read YTCE…SGPG, YPCE…GQRR, and HFCS…PEVP.

This sequence belongs to the krueppel C2H2-type zinc-finger protein family.

The protein localises to the nucleus. Functionally, may be involved in transcriptional regulation. The polypeptide is Zinc finger protein 446 (ZNF446) (Homo sapiens (Human)).